Consider the following 152-residue polypeptide: Antiholin-like protein LrgA (152 aa).

4 helical membrane-spanning segments follow: residues 23–43, 45–65, 77–97, and 108–128; these read YSIF…KIIE, FMPI…IALC, VGTA…ISVI, and ILII…TGFA.

The protein belongs to the CidA/LrgA family. LrgA subfamily.

The protein localises to the cell membrane. In terms of biological role, inhibits the expression or activity of extracellular murein hydrolases by interacting, possibly with LrgB, with the holin-like proteins CidA and/or CidB. The LrgAB and CidAB proteins may affect the proton motive force of the membrane. May be involved in programmed cell death (PCD), possibly triggering PCD in response to antibiotics and environmental stresses. The chain is Antiholin-like protein LrgA from Staphylococcus epidermidis (strain ATCC 35984 / DSM 28319 / BCRC 17069 / CCUG 31568 / BM 3577 / RP62A).